Consider the following 318-residue polypeptide: Transaldolase (318 aa).

The active-site Schiff-base intermediate with substrate is the K131.

The protein belongs to the transaldolase family. Type 1 subfamily. In terms of assembly, homodimer.

Its subcellular location is the cytoplasm. The enzyme catalyses D-sedoheptulose 7-phosphate + D-glyceraldehyde 3-phosphate = D-erythrose 4-phosphate + beta-D-fructose 6-phosphate. It functions in the pathway carbohydrate degradation; pentose phosphate pathway; D-glyceraldehyde 3-phosphate and beta-D-fructose 6-phosphate from D-ribose 5-phosphate and D-xylulose 5-phosphate (non-oxidative stage): step 2/3. Functionally, transaldolase is important for the balance of metabolites in the pentose-phosphate pathway. This Buchnera aphidicola subsp. Cinara cedri (strain Cc) protein is Transaldolase.